An 829-amino-acid polypeptide reads, in one-letter code: UBA domain-containing protein 8 (829 aa).

The EH 1 domain maps to 10–109; sequence EQQEFDRLLE…KQAKDDHHIK (100 aa). The EF-hand 1 domain occupies 43–78; sequence LPQKILAKIWDYCDQEDKGSLDRNQVYACFRLISQA. A disordered region spans residues 93-121; it reads GDPPILPKQAKDDHHIKRSSSETADFTPF. 2 positions are modified to phosphoserine: serine 112 and serine 113. EH domains lie at 129–225 and 300–398; these read ERSE…AKSE and DRSN…SDDT. Residues 333-368 form the EF-hand 2 domain; that stretch reads LDSEELARIWDTVDTQDRGYIDKDEFAVAMEIIKLR. Polar residues-rich tracts occupy residues 466–506 and 574–590; these read SFQD…TQSI and TIPGSTSAALDDQQTTE. Disordered regions lie at residues 466–520, 574–614, and 724–785; these read SFQD…VNSS, TIPG…MRKL, and KPQV…QSYE. Residues 602 to 709 are a coiled coil; it reads EPTEEEQEEM…AKIDSIIADS (108 aa). A compositionally biased stretch (pro residues) spans 728–737; that stretch reads TPAPPTPAPT. The span at 764–774 shows a compositional bias: polar residues; that stretch reads HANSSTPMNYV. Positions 775–785 are enriched in low complexity; the sequence is SQPESPPQSYE. The UBA domain maps to 788–828; the sequence is QNDNELLQELLSMGFPREKAVIALEATNYDVNEAANILLSS.

This Schizosaccharomyces pombe (strain 972 / ATCC 24843) (Fission yeast) protein is UBA domain-containing protein 8 (ucp8).